Reading from the N-terminus, the 166-residue chain is Podoplanin (166 aa).

A signal peptide spans 1 to 22 (MWTAPVLLWVLGSVWFWDSAQG). Residues 23-135 (GAIGALEDDL…KKDGLAVVTL (113 aa)) are Extracellular-facing. O-linked (GalNAc...) threonine glycans are attached at residues Thr-34, Thr-52, Thr-55, and Thr-56. A compositionally biased stretch (basic and acidic residues) spans 54-63 (DTTGELDKST). The segment at 54–124 (DTTGELDKST…DNAGGETQTT (71 aa)) is disordered. The O-linked (GalNAc...) serine glycan is linked to Ser-62. Residues Thr-63, Thr-71, and Thr-80 are each glycosylated (O-linked (GalNAc...) threonine). An O-linked (GalNAc...) serine glycan is attached at Ser-81. A glycan (O-linked (GalNAc...) threonine) is linked at Thr-83. Residue Ser-84 is glycosylated (O-linked (GalNAc...) serine). Basic and acidic residues predominate over residues 84-93 (SDHDHKEHES). Thr-94, Thr-95, Thr-96, Thr-101, Thr-105, Thr-109, and Thr-110 each carry an O-linked (GalNAc...) threonine glycan. Polar residues predominate over residues 94 to 103 (TTTVKAVTSH). The span at 104–114 (STDKKTTHPNR) shows a compositional bias: basic and acidic residues. A helical transmembrane segment spans residues 136-156 (VGIIIGVLLAIGFIGGIIIVV). The segment at 137-141 (GIIIG) is requires for dimerization and lipid rafts association. Residues 157–166 (MRKISGRFSP) are Cytoplasmic-facing. Positions 158–159 (RK) are requires for interaction with MSN and EZR.

Belongs to the podoplanin family. Homodimer. Interacts with CLEC1B; the interaction is independent of CLEC1B glycosylation and activates CLEC1B; the interaction is dependent of sialic acid on O-glycans. Interacts with CD9; this interaction is homophilic and attenuates platelet aggregation and pulmonary metastasis induced by PDPN. Interacts with LGALS8; the interaction is glycosylation-dependent; may participate in connection of the lymphatic endothelium to the surrounding extracellular matrix. Interacts with HSPA9. Interacts (via extracellular domain) with CD44; this interaction is required for PDPN-mediated directional migration and regulation of lamellipodia extension/stabilization during cell spreading and migration. Interacts (via cytoplasmic domain) with MSN and EZR; activates RHOA and promotes epithelial-mesenchymal transition. Interacts with CCL21; relocalized PDPN to the basolateral membrane. Post-translationally, extensively O-glycosylated. Contains sialic acid residues. O-glycosylation is necessary for platelet aggregation activity. Disialylated at Thr-52; sialic acid is critical for platelet-aggregating activity and for CLEC1B interaction. The N-terminus is blocked. In terms of tissue distribution, in adult kidney, expressed on the urinary surface and foot processes of podocytes and in parietal epithelial cells of Bowman's capsule where it is localized to luminal surfaces. In lung, expressed exclusively on luminal surfaces of type I alveolar epithelial cells and pleural mesothelial cells. Not expressed in type II alveolar cells. In bone, expressed in osteocytes and osteoblasts. In spleen, liver, stomach and intestine, expressed in mesoepithelium. Also expressed in thymic epithelial cells, choroid plexus and leptomeninges.

The protein localises to the membrane. It is found in the cell projection. It localises to the lamellipodium membrane. The protein resides in the filopodium membrane. Its subcellular location is the microvillus membrane. The protein localises to the ruffle membrane. It is found in the membrane raft. It localises to the apical cell membrane. The protein resides in the basolateral cell membrane. Its subcellular location is the invadopodium. In terms of biological role, mediates effects on cell migration and adhesion through its different partners. During development plays a role in blood and lymphatic vessels separation by binding CLEC1B, triggering CLEC1B activation in platelets and leading to platelet activation and/or aggregation. Interaction with CD9, on the contrary, attenuates platelet aggregation and pulmonary metastasis induced by PDPN. Mediates effects on cell migration and adhesion through its different partners. Through MSN or EZR interaction promotes epithelial-mesenchymal transition (EMT) leading to ERZ phosphorylation and triggering RHOA activation leading to cell migration increase and invasiveness. Interaction with CD44 promotes directional cell migration in epithelial and tumor cells. In lymph nodes (LNs), controls fibroblastic reticular cells (FRCs) adhesion to the extracellular matrix (ECM) and contraction of the actomyosin by maintaining ERM proteins (EZR; MSN and RDX) and MYL9 activation through association with unknown transmembrane proteins. Engagement of CLEC1B by PDPN promotes FRCs relaxation by blocking lateral membrane interactions leading to reduction of ERM proteins (EZR; MSN and RDX) and MYL9 activation. Through binding with LGALS8 may participate in connection of the lymphatic endothelium to the surrounding extracellular matrix. In keratinocytes, induces changes in cell morphology showing an elongated shape, numerous membrane protrusions, major reorganization of the actin cytoskeleton, increased motility and decreased cell adhesion. Controls invadopodia stability and maturation leading to efficient degradation of the extracellular matrix (ECM) in tumor cells through modulation of RHOC activity in order to activate ROCK1/ROCK2 and LIMK1/LIMK2 and inactivation of CFL1. Required for normal lung cell proliferation and alveolus formation at birth. Does not function as a water channel or as a regulator of aquaporin-type water channels. Does not have any effect on folic acid or amino acid transport. The sequence is that of Podoplanin from Rattus norvegicus (Rat).